We begin with the raw amino-acid sequence, 1760 residues long: Chitin synthase csmB (1760 aa).

Residues Met-1 to Ser-17 are compositionally biased toward low complexity. The segment at Met-1–Pro-23 is disordered. The 374-residue stretch at Met-1–Pro-374 folds into the Myosin motor domain. Residue Asn-275 is glycosylated (N-linked (GlcNAc...) asparagine). The interval Leu-344–Asp-363 is disordered. A region of interest (actin-binding) is located at residue Pro-374. A run of 2 helical transmembrane segments spans residues Ile-731–Ile-751 and Leu-767–Phe-787. N-linked (GlcNAc...) asparagine glycans are attached at residues Asn-878, Asn-906, and Asn-995. Residues Ile-1029–Leu-1049 traverse the membrane as a helical segment. Asn-1394 is a glycosylation site (N-linked (GlcNAc...) asparagine). Transmembrane regions (helical) follow at residues Phe-1419–Gly-1439, Phe-1452–Leu-1472, and Ile-1480–Tyr-1500. N-linked (GlcNAc...) asparagine glycosylation is found at Asn-1584 and Asn-1652. The DEK-C domain maps to Gly-1702–Ala-1758.

In the N-terminal section; belongs to the TRAFAC class myosin-kinesin ATPase superfamily. Myosin family. This sequence in the C-terminal section; belongs to the chitin synthase family. Class V subfamily.

The protein localises to the cell membrane. It is found in the cell septum. Its subcellular location is the cell tip. It catalyses the reaction [(1-&gt;4)-N-acetyl-beta-D-glucosaminyl](n) + UDP-N-acetyl-alpha-D-glucosamine = [(1-&gt;4)-N-acetyl-beta-D-glucosaminyl](n+1) + UDP + H(+). In terms of biological role, polymerizes chitin, a structural polymer of the cell wall and septum, by transferring the sugar moiety of UDP-GlcNAc to the non-reducing end of the growing chitin polymer. Plays an important role in septal growth or maintenance. Mediates colony spore formation. The sequence is that of Chitin synthase csmB from Aspergillus niger (strain ATCC MYA-4892 / CBS 513.88 / FGSC A1513).